The following is a 218-amino-acid chain: MWAMSGALRPWALILARSPGARTYAGGGGVSYTQGQSPEPRTREYFYYVDHQGQLFLDDSRMKNFTTCFKDPQFLVMFFSRLRPNRSGRYEAYFPFLSLCGRERNFLRCEDRPVVFTHLLAAGPAPQRLSYCGGGEALAVPFEPARLLPLATNGRLYHPAPERAGGVGLVRSALAFELSACFEYAPGAPELPSHVRWQGRRFALTMDLAPLLLAAPPP.

Belongs to the UPF0598 family.

The protein is UPF0598 protein C8orf82 homolog of Bos taurus (Bovine).